Here is a 391-residue protein sequence, read N- to C-terminus: Formate-dependent phosphoribosylglycinamide formyltransferase (391 aa).

Residues 20–21 (EL) and E80 each bind N(1)-(5-phospho-beta-D-ribosyl)glycinamide. Residues R112, K153, 158–163 (SSGKGQ), 193–196 (EGFI), and E201 contribute to the ATP site. Positions 117–306 (RLAAETLGLP…EFALHVRAIL (190 aa)) constitute an ATP-grasp domain. Residues E265 and E277 each coordinate Mg(2+). Residues D284, K354, and 361 to 362 (RR) contribute to the N(1)-(5-phospho-beta-D-ribosyl)glycinamide site.

It belongs to the PurK/PurT family. Homodimer.

It carries out the reaction N(1)-(5-phospho-beta-D-ribosyl)glycinamide + formate + ATP = N(2)-formyl-N(1)-(5-phospho-beta-D-ribosyl)glycinamide + ADP + phosphate + H(+). The protein operates within purine metabolism; IMP biosynthesis via de novo pathway; N(2)-formyl-N(1)-(5-phospho-D-ribosyl)glycinamide from N(1)-(5-phospho-D-ribosyl)glycinamide (formate route): step 1/1. Functionally, involved in the de novo purine biosynthesis. Catalyzes the transfer of formate to 5-phospho-ribosyl-glycinamide (GAR), producing 5-phospho-ribosyl-N-formylglycinamide (FGAR). Formate is provided by PurU via hydrolysis of 10-formyl-tetrahydrofolate. This Shewanella oneidensis (strain ATCC 700550 / JCM 31522 / CIP 106686 / LMG 19005 / NCIMB 14063 / MR-1) protein is Formate-dependent phosphoribosylglycinamide formyltransferase.